The following is a 157-amino-acid chain: V-type proton ATPase 16 kDa proteolipid subunit c (157 aa).

Residues 1 to 10 lie on the Lumenal side of the membrane; the sequence is MALPEENPVY. The chain crosses the membrane as a helical span at residues 11–33; the sequence is GPFFGVMGAAAAIIFSALGAAYG. At 34–55 the chain is on the cytoplasmic side; sequence TAKSGTGIAAMSVMRPELIMKS. The chain crosses the membrane as a helical span at residues 56-76; it reads IIPVVMAGIIAIYGLVVAVLI. The Lumenal portion of the chain corresponds to 77-94; that stretch reads AGSLDTPTKYSLYKGFIH. The chain crosses the membrane as a helical span at residues 95–116; that stretch reads LGAGLAVGFSGLAAGFAIGIVG. Over 117–128 the chain is Cytoplasmic; that stretch reads DAGVRGTAQQPR. Residues 129–154 form a helical membrane-spanning segment; the sequence is LFVGMILILIFAEVLGLYGLIVAIYL. Topologically, residues 155–157 are lumenal; the sequence is YTK.

The protein belongs to the V-ATPase proteolipid subunit family. In terms of assembly, V-ATPase is a heteromultimeric enzyme made up of two complexes: the ATP-hydrolytic V1 complex and the proton translocation V0 complex. The V1 complex consists of three catalytic AB heterodimers that form a heterohexamer, three peripheral stalks each consisting of EG heterodimers, one central rotor including subunits D and F, and the regulatory subunits C and H. The proton translocation complex V0 consists of the proton transport subunit a, a ring of proteolipid subunits c9c'', rotary subunit d, subunits e and f, and the accessory subunits VhaAC45 and ATP6AP2.

Its subcellular location is the membrane. Proton-conducting pore forming subunit of the V0 complex of vacuolar(H+)-ATPase (V-ATPase), a multisubunit enzyme composed of a peripheral complex (V1) that hydrolyzes ATP and a membrane integral complex (V0) that translocates protons. V-ATPase is responsible for acidifying and maintaining the pH of intracellular compartments and in some cell types, is targeted to the plasma membrane, where it is responsible for acidifying the extracellular environment. The protein is V-type proton ATPase 16 kDa proteolipid subunit c of Aedes aegypti (Yellowfever mosquito).